We begin with the raw amino-acid sequence, 492 residues long: Proline--tRNA ligase (492 aa).

This sequence belongs to the class-II aminoacyl-tRNA synthetase family. ProS type 3 subfamily. As to quaternary structure, homodimer.

It is found in the cytoplasm. It carries out the reaction tRNA(Pro) + L-proline + ATP = L-prolyl-tRNA(Pro) + AMP + diphosphate. Its function is as follows. Catalyzes the attachment of proline to tRNA(Pro) in a two-step reaction: proline is first activated by ATP to form Pro-AMP and then transferred to the acceptor end of tRNA(Pro). In Christiangramia forsetii (strain DSM 17595 / CGMCC 1.15422 / KT0803) (Gramella forsetii), this protein is Proline--tRNA ligase.